Here is a 313-residue protein sequence, read N- to C-terminus: tRNA dimethylallyltransferase (313 aa).

Residue 14–21 (GPTASGKT) coordinates ATP. 16–21 (TASGKT) lines the substrate pocket. Interaction with substrate tRNA regions lie at residues 39-42 (DSAL) and 163-167 (QRIGR).

The protein belongs to the IPP transferase family. In terms of assembly, monomer. It depends on Mg(2+) as a cofactor.

It catalyses the reaction adenosine(37) in tRNA + dimethylallyl diphosphate = N(6)-dimethylallyladenosine(37) in tRNA + diphosphate. In terms of biological role, catalyzes the transfer of a dimethylallyl group onto the adenine at position 37 in tRNAs that read codons beginning with uridine, leading to the formation of N6-(dimethylallyl)adenosine (i(6)A). The protein is tRNA dimethylallyltransferase of Thiobacillus denitrificans (strain ATCC 25259 / T1).